Reading from the N-terminus, the 486-residue chain is Galactose-1-phosphate uridylyltransferase (486 aa).

Belongs to the galactose-1-phosphate uridylyltransferase type 2 family.

The protein localises to the cytoplasm. It catalyses the reaction alpha-D-galactose 1-phosphate + UDP-alpha-D-glucose = alpha-D-glucose 1-phosphate + UDP-alpha-D-galactose. Its pathway is carbohydrate metabolism; galactose metabolism. The protein is Galactose-1-phosphate uridylyltransferase of Lacticaseibacillus casei (Lactobacillus casei).